The chain runs to 211 residues: Protein FAM167A (211 aa).

Disordered regions lie at residues 1–30 (MSVP…DHLR) and 56–108 (EEQT…GKLE). Positions 120 to 153 (LRKELMEMRLQDQQLARQLMRLRSDIHKLKIEQT) form a coiled coil.

This sequence belongs to the FAM167 (SEC) family.

In Bos taurus (Bovine), this protein is Protein FAM167A (FAM167A).